The sequence spans 962 residues: Nonsense-mediated mRNA decay factor SMG8 (962 aa).

A disordered region spans residues 634 to 661 (RSPEISSQIASSGLSSRSNSTSSGTSSA). Over residues 639–661 (SSQIASSGLSSRSNSTSSGTSSA) the composition is skewed to low complexity.

The protein belongs to the SMG8 family.

Functionally, involved in nonsense-mediated decay (NMD) of mRNAs containing premature stop codons. Probable component of kinase complex containing nonC and recruited to stalled ribosomes. The protein is Nonsense-mediated mRNA decay factor SMG8 of Drosophila virilis (Fruit fly).